The following is a 725-amino-acid chain: LPS-assembly protein LptD (725 aa).

Positions 1–25 are cleaved as a signal peptide; sequence MSLLSKLHLILYICLLLLPLRFVNA.

This sequence belongs to the LptD family. Component of the lipopolysaccharide transport and assembly complex. Interacts with LptE and LptA.

It is found in the cell outer membrane. In terms of biological role, together with LptE, is involved in the assembly of lipopolysaccharide (LPS) at the surface of the outer membrane. The protein is LPS-assembly protein LptD of Nitrosomonas eutropha (strain DSM 101675 / C91 / Nm57).